Consider the following 310-residue polypeptide: Glutaminase 1 (310 aa).

7 residues coordinate substrate: S66, N117, E161, N168, Y192, Y244, and V262. At K294 the chain carries N6-acetyllysine.

This sequence belongs to the glutaminase family. As to quaternary structure, homotetramer.

It carries out the reaction L-glutamine + H2O = L-glutamate + NH4(+). The polypeptide is Glutaminase 1 (Escherichia coli O6:H1 (strain CFT073 / ATCC 700928 / UPEC)).